The chain runs to 50 residues: Protein hunchback (50 aa).

3 consecutive C2H2-type zinc fingers follow at residues 1 to 5 (HLRNH), 11 to 33 (FKCGKCNYSCANKSMLNSHMKSH), and 39 to 50 (YRCANCCYATKY).

This sequence belongs to the hunchback C2H2-type zinc-finger protein family.

Its subcellular location is the nucleus. Gap class segmentation protein that controls development of head structures. The protein is Protein hunchback (hb) of Pholcus phalangioides (Longbodied cellar spider).